The chain runs to 202 residues: Small ribosomal subunit protein uS4 (202 aa).

The interval 18–44 (LPGLTRKSARREYPPGQHGQGRRKRSE) is disordered. The region spanning 90–152 (MRLDNTVFRL…DRSRKLIEAN (63 aa)) is the S4 RNA-binding domain.

It belongs to the universal ribosomal protein uS4 family. In terms of assembly, part of the 30S ribosomal subunit. Contacts protein S5. The interaction surface between S4 and S5 is involved in control of translational fidelity.

Functionally, one of the primary rRNA binding proteins, it binds directly to 16S rRNA where it nucleates assembly of the body of the 30S subunit. In terms of biological role, with S5 and S12 plays an important role in translational accuracy. The protein is Small ribosomal subunit protein uS4 of Picosynechococcus sp. (strain ATCC 27264 / PCC 7002 / PR-6) (Agmenellum quadruplicatum).